The following is a 1523-amino-acid chain: WD repeat-containing protein 62 (1523 aa).

N-acetylalanine is present on Ala-2. Phosphoserine is present on Ser-33. The residue at position 46 (Thr-46) is a Phosphothreonine. WD repeat units lie at residues 109 to 150, 153 to 194, 196 to 234, 291 to 330, 357 to 396, 411 to 450, 490 to 529, 532 to 574, 578 to 618, 626 to 665, 671 to 713, and 714 to 752; these read TTRK…QVAE, GHKY…VVAS, KVSC…EAKV, INLK…YLTN, AVYP…EVSK, EVYP…DTRW, DMKA…ELIK, AHDA…NLEQ, DHSS…DGLH, AEKT…QKKC, GDEG…KMFG, and HSEI…TTCM. A Phosphoserine modification is found at Ser-501. The disordered stretch occupies residues 762-824; sequence QEQQQQPKDQ…PSKDSLDPDP (63 aa). A compositionally biased stretch (polar residues) spans 776 to 790; it reads PPSQETYASTPSEIR. The span at 797–809 shows a compositional bias: acidic residues; the sequence is QTEDEMEEECEPE. Residues 803-846 form a WD 13 repeat; that stretch reads EEECEPEELLKTPSKDSLDPDPRCLLTNGKLPLWAKRLLGDDDV. The segment covering 810-824 has biased composition (basic and acidic residues); that stretch reads ELLKTPSKDSLDPDP. Ser-966 and Ser-972 each carry phosphoserine. The disordered stretch occupies residues 1000 to 1072; the sequence is VSSVSSKDQS…GLGNGSLPQT (73 aa). Position 1072 is a phosphothreonine (Thr-1072). Phosphoserine occurs at positions 1117, 1143, and 1169. Positions 1143-1258 are disordered; the sequence is SPEAQPVGQG…SLHKPLSPGQ (116 aa). 2 stretches are compositionally biased toward polar residues: residues 1167–1177 and 1199–1213; these read YMSSDGTNVLS and TSVL…ISAP. The segment covering 1214 to 1225 has biased composition (low complexity); it reads SSCSYLESTTSS. Residues 1226 to 1235 are compositionally biased toward polar residues; that stretch reads HAKTTRSISL. Ser-1234 is modified (phosphoserine).

Can form homodimers (via C-terminus). Interacts (via C-terminus) with MAPKBP1 (via C-terminus). Interacts with CDK5RAP2, CEP152, CEP63 and KIAA0753. CEP63, CDK5RAP2, CEP152, WDR62 are proposed to form a stepwise assembled complex at the centrosome forming a ring near parental centrioles. As to expression, prominent in neural crest lineages from 9.5 dpc to 11.5 dpc. Also expressed in the ventricular and subventricular zones during the period of cerebral cortical neurogenesis (11.5-16.5 dpc), with expression decreasing in intensity by 17.5 dpc. In the cerebellum, it is strongly expressed in precursors of granule neurons at late embryonic and early postnatal stages; by postnatal day 9 (P9). Present in fetal brain, enriched within the ventricular and subventricular zone (at protein level).

Its subcellular location is the nucleus. It is found in the cytoplasm. It localises to the cytoskeleton. The protein localises to the spindle pole. The protein resides in the microtubule organizing center. Its subcellular location is the centrosome. It is found in the centriole. Functionally, required for cerebral cortical development. Plays a role in neuronal proliferation and migration. Plays a role in mother-centriole-dependent centriole duplication; the function seems also to involve CEP152, CDK5RAP2 and CEP63 through a stepwise assembled complex at the centrosome that recruits CDK2 required for centriole duplication. This Mus musculus (Mouse) protein is WD repeat-containing protein 62 (Wdr62).